Here is a 288-residue protein sequence, read N- to C-terminus: 4-hydroxy-3-methylbut-2-enyl diphosphate reductase (288 aa).

C12 provides a ligand contact to [4Fe-4S] cluster. (2E)-4-hydroxy-3-methylbut-2-enyl diphosphate contacts are provided by H42 and H77. Positions 42 and 77 each coordinate dimethylallyl diphosphate. Isopentenyl diphosphate is bound by residues H42 and H77. C99 contributes to the [4Fe-4S] cluster binding site. (2E)-4-hydroxy-3-methylbut-2-enyl diphosphate is bound at residue H127. Residue H127 coordinates dimethylallyl diphosphate. H127 provides a ligand contact to isopentenyl diphosphate. The Proton donor role is filled by E129. T165 contacts (2E)-4-hydroxy-3-methylbut-2-enyl diphosphate. C193 provides a ligand contact to [4Fe-4S] cluster. 4 residues coordinate (2E)-4-hydroxy-3-methylbut-2-enyl diphosphate: S221, S222, N223, and S265. The dimethylallyl diphosphate site is built by S221, S222, N223, and S265. Isopentenyl diphosphate contacts are provided by S221, S222, N223, and S265.

The protein belongs to the IspH family. [4Fe-4S] cluster serves as cofactor.

It carries out the reaction isopentenyl diphosphate + 2 oxidized [2Fe-2S]-[ferredoxin] + H2O = (2E)-4-hydroxy-3-methylbut-2-enyl diphosphate + 2 reduced [2Fe-2S]-[ferredoxin] + 2 H(+). The catalysed reaction is dimethylallyl diphosphate + 2 oxidized [2Fe-2S]-[ferredoxin] + H2O = (2E)-4-hydroxy-3-methylbut-2-enyl diphosphate + 2 reduced [2Fe-2S]-[ferredoxin] + 2 H(+). The protein operates within isoprenoid biosynthesis; dimethylallyl diphosphate biosynthesis; dimethylallyl diphosphate from (2E)-4-hydroxy-3-methylbutenyl diphosphate: step 1/1. It functions in the pathway isoprenoid biosynthesis; isopentenyl diphosphate biosynthesis via DXP pathway; isopentenyl diphosphate from 1-deoxy-D-xylulose 5-phosphate: step 6/6. Functionally, catalyzes the conversion of 1-hydroxy-2-methyl-2-(E)-butenyl 4-diphosphate (HMBPP) into a mixture of isopentenyl diphosphate (IPP) and dimethylallyl diphosphate (DMAPP). Acts in the terminal step of the DOXP/MEP pathway for isoprenoid precursor biosynthesis. This chain is 4-hydroxy-3-methylbut-2-enyl diphosphate reductase, found in Thermoanaerobacter pseudethanolicus (strain ATCC 33223 / 39E) (Clostridium thermohydrosulfuricum).